Reading from the N-terminus, the 359-residue chain is MVNDTFEQALQNAINIARLAPSSHNCQPWSVHYDAATRCGEVSIDRQRALKGLPSLEREMLMSCGIFFEYLSTLLKHSGYPLDWQWVGARQNGSSGMLISFAPSAPCVADLVAYQQWVQRISDRHTVRTAYQPTQVNEQQQAQLYALFDRSPVTCDIKYGEATRHDVAFLTANYASLDFADQQAWRETYHYIRFNEQQAAEDGFYLHHLFGPVSCGFRWFFRIAFHPRLSWLAKRLRLPASMAKGLAELVVEGPQYLALSLEHESDENLFIAGMKLGQLWLMLQSWGWSLHPLSVLVQHATARCALADTVRLTGLPVFFARFGQHRQSGIPTPRRAWQRILTTTQHSFSPENGADVKQP.

Belongs to the nitroreductase family. Requires FMN as cofactor.

It participates in antibiotic biosynthesis; prodigiosin biosynthesis. Its function is as follows. Involved in the biosynthesis of 4-methoxy-2,2'-bipyrrole-5-carbaldehyde (MBC), one of the terminal products involved in the biosynthesis of the red antibiotic prodigiosin (Pig). Catalyzes the oxidation of the hydroxy group of 4-hydroxy-2,2'-bipyrrole-5-methanol (HBM) to yield 4-methoxy-2,2'-bipyrrole-5-carbaldehyde (MBC). This chain is Probable NAD(P)H nitroreductase PigM, found in Serratia sp. (strain ATCC 39006) (Prodigiosinella confusarubida).